The sequence spans 30 residues: Cyclotide hyen-E (30 aa).

A cross-link (cyclopeptide (Gly-Asn)) is located at residues 1–30 (GVPCGESCVYIPCFTGIINCSCRDKVCYNN). Cystine bridges form between cysteine 4/cysteine 20, cysteine 8/cysteine 22, and cysteine 13/cysteine 27.

This is a cyclic peptide. In terms of tissue distribution, detected in stems (at protein level).

Functionally, probably participates in a plant defense mechanism. Has cytotoxic activity against HUVEC cells (LC(50)= 2.17 uM) and various cancer cells including HeLa (LC(50)= 3.05 uM), MCF-7 and K562. Displays very weak hemolytic activity. Binds to and induces leakage in phospholipd membranes, particularly ones containing 1-palmitoyl-2-oleophosphatidylethanolamine (POPE). This is Cyclotide hyen-E from Pigea enneasperma (Spade flower).